The following is a 377-amino-acid chain: Mechanosensory abnormality protein 6 (377 aa).

Residues 1–13 lie on the Cytoplasmic side of the membrane; it reads MGLQSAAAHFINR. The chain crosses the membrane as a helical span at residues 14–34; sequence FIIWITIFMVACFLLRLLVVL. Residues 35-377 are Extracellular-facing; sequence DLNKRVYNHT…HCDLTHSYIT (343 aa). A disulfide bond links Cys-48 and Cys-369. Asn-94 carries N-linked (GlcNAc...) asparagine glycosylation.

It belongs to the paraoxonase family. In terms of assembly, component of a non-voltage-gated amiloride-sensitive cation channel complex (also called the degenerin channel complex) composed of at least the mec-2, mec-4, mec-6 and mec-10 subunits; the complex mediates mechanotransduction in touch cells. Interacts with mec-2, mec-4 and mec-10. In terms of processing, glycosylated. In terms of tissue distribution, expressed in neurons including the six touch receptors, ventral cord motor neurons, HSN, PVD, PVC, IL1, and several neurons near the nerve ring, in the anal ganglion and in the male tail sensory rays, in muscles including the body wall, vulval, intestinal, anal depressor and sphincter muscles, and in the excretory canal.

The protein localises to the cell membrane. It localises to the cell projection. It is found in the axon. In terms of biological role, subunit of an amiloride-sensitive cation channel (degenerin channel complex) permeable for sodium, potassium, lithium and N-methylglucamine, and required for mechanosensory transduction (touch sensitivity). Interacts with degenerin channel proteins and stabilizes the channel. Plays a role in mechanosensory transduction (touch sensitivity). This chain is Mechanosensory abnormality protein 6, found in Caenorhabditis elegans.